Reading from the N-terminus, the 1119-residue chain is SH3 and PX domain-containing protein 2A (1119 aa).

The PX domain occupies 4-128 (RTVLDVKVVD…RFFETKPDDI (125 aa)). SH3 domains are found at residues 149-208 (MVLE…SQSG) and 249-308 (SREE…KLKD). Disordered stretches follow at residues 388–429 (SSAT…PPRR), 494–595 (APSS…SNPA), 641–815 (SSDD…HESV), 914–941 (NLRS…AMLN), and 957–1004 (RPQS…SSFT). The 60-residue stretch at 445–504 (TVEAEYYTIAEFQSSISDGISFRGGQKADVIEKNSGGWWYVQIGDTEGWAPSSYIDKRKK) folds into the SH3 3 domain. Basic and acidic residues-rich tracts occupy residues 581–590 (PKPEPRKFEI) and 688–718 (GRAE…DVEI). A compositionally biased stretch (low complexity) spans 779-802 (TASVVSSEDSTSSRSTSDLSSVYS). Residues 806-815 (RGGESDHESV) show a composition bias toward basic and acidic residues. An SH3 4 domain is found at 812–871 (HESVLFRTTDAYERAQESELSFPAGVEVEVLEKQESGWWFVRWGSDEGWVPTFYLEPIKH). An SH3 5 domain is found at 1058 to 1119 (NLREVYVSIA…VPSNYLERKK (62 aa)).

It belongs to the SH3PXD2 family. Post-translationally, tyrosine phosphorylated.

The protein localises to the cytoplasm. It is found in the cell projection. Its subcellular location is the podosome. Its function is as follows. Adapter protein involved in invadopodia and podosome formation and extracellular matrix degradation. The protein is SH3 and PX domain-containing protein 2A (sh3pxd2a) of Danio rerio (Zebrafish).